The chain runs to 507 residues: Lysine--tRNA ligase (507 aa).

Mg(2+)-binding residues include E406 and E413.

This sequence belongs to the class-II aminoacyl-tRNA synthetase family. In terms of assembly, homodimer. Mg(2+) serves as cofactor.

The protein resides in the cytoplasm. The catalysed reaction is tRNA(Lys) + L-lysine + ATP = L-lysyl-tRNA(Lys) + AMP + diphosphate. This is Lysine--tRNA ligase from Wolinella succinogenes (strain ATCC 29543 / DSM 1740 / CCUG 13145 / JCM 31913 / LMG 7466 / NCTC 11488 / FDC 602W) (Vibrio succinogenes).